A 307-amino-acid polypeptide reads, in one-letter code: UDP-3-O-acyl-N-acetylglucosamine deacetylase (307 aa).

Residues H78, H241, and D245 each contribute to the Zn(2+) site. H268 acts as the Proton donor in catalysis.

It belongs to the LpxC family. Requires Zn(2+) as cofactor.

The enzyme catalyses a UDP-3-O-[(3R)-3-hydroxyacyl]-N-acetyl-alpha-D-glucosamine + H2O = a UDP-3-O-[(3R)-3-hydroxyacyl]-alpha-D-glucosamine + acetate. The protein operates within glycolipid biosynthesis; lipid IV(A) biosynthesis; lipid IV(A) from (3R)-3-hydroxytetradecanoyl-[acyl-carrier-protein] and UDP-N-acetyl-alpha-D-glucosamine: step 2/6. Its function is as follows. Catalyzes the hydrolysis of UDP-3-O-myristoyl-N-acetylglucosamine to form UDP-3-O-myristoylglucosamine and acetate, the committed step in lipid A biosynthesis. In Paracidovorax citrulli (strain AAC00-1) (Acidovorax citrulli), this protein is UDP-3-O-acyl-N-acetylglucosamine deacetylase.